The sequence spans 369 residues: Histidinol-phosphate aminotransferase (369 aa).

N6-(pyridoxal phosphate)lysine is present on lysine 223.

Belongs to the class-II pyridoxal-phosphate-dependent aminotransferase family. Histidinol-phosphate aminotransferase subfamily. In terms of assembly, homodimer. The cofactor is pyridoxal 5'-phosphate.

It carries out the reaction L-histidinol phosphate + 2-oxoglutarate = 3-(imidazol-4-yl)-2-oxopropyl phosphate + L-glutamate. The protein operates within amino-acid biosynthesis; L-histidine biosynthesis; L-histidine from 5-phospho-alpha-D-ribose 1-diphosphate: step 7/9. Catalyzes the conversion of imidazole acetol phosphate to histidinol phosphate. Can also transaminate aromatic amino acids and histidine in addition to histidinol phosphate. This Zymomonas mobilis subsp. mobilis (strain ATCC 31821 / ZM4 / CP4) protein is Histidinol-phosphate aminotransferase.